Here is a 549-residue protein sequence, read N- to C-terminus: Polynucleotide 5'-hydroxyl-kinase nol-9 (549 aa).

Residue 190-197 participates in ATP binding; sequence GHKGAGKS.

Belongs to the Clp1 family. NOL9/GRC3 subfamily.

The protein resides in the nucleus. It localises to the nucleolus. Functionally, polynucleotide 5'-kinase involved in rRNA processing. This Caenorhabditis elegans protein is Polynucleotide 5'-hydroxyl-kinase nol-9 (nol-9).